A 160-amino-acid polypeptide reads, in one-letter code: Phosphopantetheine adenylyltransferase (160 aa).

Residue S9 participates in substrate binding. Residues S9–F10 and H17 each bind ATP. K41, I73, and K87 together coordinate substrate. Residues G88–R90, E98, and Y122–S128 each bind ATP.

This sequence belongs to the bacterial CoaD family. As to quaternary structure, homohexamer. Mg(2+) is required as a cofactor.

It is found in the cytoplasm. It catalyses the reaction (R)-4'-phosphopantetheine + ATP + H(+) = 3'-dephospho-CoA + diphosphate. Its pathway is cofactor biosynthesis; coenzyme A biosynthesis; CoA from (R)-pantothenate: step 4/5. Functionally, reversibly transfers an adenylyl group from ATP to 4'-phosphopantetheine, yielding dephospho-CoA (dPCoA) and pyrophosphate. This chain is Phosphopantetheine adenylyltransferase, found in Mycolicibacterium gilvum (strain PYR-GCK) (Mycobacterium gilvum (strain PYR-GCK)).